A 137-amino-acid polypeptide reads, in one-letter code: Large ribosomal subunit protein uL16 (137 aa).

Belongs to the universal ribosomal protein uL16 family. As to quaternary structure, part of the 50S ribosomal subunit.

Binds 23S rRNA and is also seen to make contacts with the A and possibly P site tRNAs. This chain is Large ribosomal subunit protein uL16, found in Pseudomonas syringae pv. tomato (strain ATCC BAA-871 / DC3000).